A 124-amino-acid chain; its full sequence is MADLAKIVEDLSSLTVLEAAELSKLLEEKWGVSAAAPVAVAAAGGGAAAVVEEEKTEFDVILTDAGANKINVIKEVRAITGLGLKEAKDLVEGAPKAVKEAVSKAEAADLKKKLEDAGAKVDVK.

It belongs to the bacterial ribosomal protein bL12 family. As to quaternary structure, homodimer. Part of the ribosomal stalk of the 50S ribosomal subunit. Forms a multimeric L10(L12)X complex, where L10 forms an elongated spine to which 2 to 4 L12 dimers bind in a sequential fashion. Binds GTP-bound translation factors.

Functionally, forms part of the ribosomal stalk which helps the ribosome interact with GTP-bound translation factors. Is thus essential for accurate translation. In Allorhizobium ampelinum (strain ATCC BAA-846 / DSM 112012 / S4) (Agrobacterium vitis (strain S4)), this protein is Large ribosomal subunit protein bL12.